The chain runs to 287 residues: Iodotyrosine deiodinase (287 aa).

Residues 15–34 (HWPSLFITLALIWIVKRLFF) form a helical membrane-spanning segment. FMN is bound by residues 96 to 100 (RRSIR), serine 125, and 125 to 126 (SG). 3,5-diiodo-L-tyrosine contacts are provided by alanine 127, glutamate 154, tyrosine 158, and lysine 179. 3-iodo-L-tyrosine contacts are provided by alanine 127, glutamate 154, tyrosine 158, and lysine 179. Residues 235 to 237 (VTT) and arginine 277 each bind FMN.

The protein belongs to the nitroreductase family. Homodimer. The cofactor is FMN. In terms of tissue distribution, expressed in spermatocytes.

It localises to the cell membrane. It catalyses the reaction 2 iodide + L-tyrosine + 2 NADP(+) = 3,5-diiodo-L-tyrosine + 2 NADPH + H(+). It carries out the reaction iodide + L-tyrosine + NADP(+) = 3-iodo-L-tyrosine + NADPH. The catalysed reaction is 3-iodo-L-tyrosine + iodide + NADP(+) = 3,5-diiodo-L-tyrosine + NADPH + H(+). The enzyme catalyses L-tyrosine + chloride + NADP(+) = 3-chloro-L-tyrosine + NADPH. It catalyses the reaction bromide + L-tyrosine + NADP(+) = 3-bromo-L-tyrosine + NADPH. Catalyzes the dehalogenation of halotyrosines such as 3-bromo-L-tyrosine, 3-chloro-L-tyrosine, 3-iodo-L-tyrosine and 3,5-diiodo-L-tyrosine. Activity towards 3-fluoro-L-tyrosine is weak. Important for male and female fertility. May be involved in maintaining the viability of sperm, both during development in the testes and storage in the female spermatheca. This Drosophila melanogaster (Fruit fly) protein is Iodotyrosine deiodinase.